The sequence spans 283 residues: Nucleoid occlusion protein (283 aa).

Residues 1–26 (MKQPFSRLFGFGDKQDQEMETGKQEE) are disordered. The segment covering 13–26 (DKQDQEMETGKQEE) has biased composition (basic and acidic residues). The H-T-H motif DNA-binding region spans 143–162 (ESLAQRLGKGQSTIANKLRL).

Belongs to the ParB family.

Its subcellular location is the cytoplasm. It is found in the nucleoid. In terms of biological role, effects nucleoid occlusion by binding relatively nonspecifically to DNA and preventing the assembly of the division machinery in the vicinity of the nucleoid, especially under conditions that disturb the cell cycle. It helps to coordinate cell division and chromosome segregation by preventing the formation of the Z ring through the nucleoid, which would cause chromosome breakage. This chain is Nucleoid occlusion protein, found in Halalkalibacterium halodurans (strain ATCC BAA-125 / DSM 18197 / FERM 7344 / JCM 9153 / C-125) (Bacillus halodurans).